Reading from the N-terminus, the 96-residue chain is Putative membrane protein insertion efficiency factor (96 aa).

The segment covering 71–84 (THGTAAAPPASAAP) has biased composition (low complexity). Residues 71 to 96 (THGTAAAPPASAAPGRPPVTVRLPRP) are disordered.

This sequence belongs to the UPF0161 family.

Its subcellular location is the cell inner membrane. Functionally, could be involved in insertion of integral membrane proteins into the membrane. The protein is Putative membrane protein insertion efficiency factor of Cupriavidus metallidurans (strain ATCC 43123 / DSM 2839 / NBRC 102507 / CH34) (Ralstonia metallidurans).